The primary structure comprises 119 residues: Parathyroid hormone (119 aa).

A signal peptide spans Met1–Gly25. A propeptide spanning residues Arg26–Arg31 is cleaved from the precursor.

The protein belongs to the parathyroid hormone family. In terms of assembly, interacts with PTH1R (via N-terminal extracellular domain).

It localises to the secreted. Functionally, parathyroid hormone elevates calcium level by dissolving the salts in bone and preventing their renal excretion. Acts by binding to its receptor, PTH1R, activating G protein-coupled receptor signaling. Stimulates [1-14C]-2-deoxy-D-glucose (2DG) transport and glycogen synthesis in osteoblastic cells. The sequence is that of Parathyroid hormone from Gallus gallus (Chicken).